The following is a 452-amino-acid chain: Tripartite motif-containing protein 51 (452 aa).

The segment at 15 to 56 adopts an RING-type zinc-finger fold; sequence CPICMNYFLDPVTIDCGHSFCRPCLYLNWQDTAVLAQCSECK. Residues 88–129 form a B box-type zinc finger; sequence SEEQICGMHRETKKMFCEVDKSLLCLPCSNSQEHRNHIHCPI. Residues Cys93, His96, Cys115, and His121 each coordinate Zn(2+). A B30.2/SPRY domain is found at 269–452; that stretch reads ELSAGPITGL…LRPIFCCSHF (184 aa).

It belongs to the TRIM/RBCC family.

The chain is Tripartite motif-containing protein 51 (TRIM51) from Homo sapiens (Human).